Reading from the N-terminus, the 302-residue chain is Sulfate adenylyltransferase subunit 2 (302 aa).

This sequence belongs to the PAPS reductase family. CysD subfamily. As to quaternary structure, heterodimer composed of CysD, the smaller subunit, and CysN.

It catalyses the reaction sulfate + ATP + H(+) = adenosine 5'-phosphosulfate + diphosphate. Its pathway is sulfur metabolism; hydrogen sulfide biosynthesis; sulfite from sulfate: step 1/3. Its function is as follows. With CysN forms the ATP sulfurylase (ATPS) that catalyzes the adenylation of sulfate producing adenosine 5'-phosphosulfate (APS) and diphosphate, the first enzymatic step in sulfur assimilation pathway. APS synthesis involves the formation of a high-energy phosphoric-sulfuric acid anhydride bond driven by GTP hydrolysis by CysN coupled to ATP hydrolysis by CysD. This is Sulfate adenylyltransferase subunit 2 from Escherichia coli O6:K15:H31 (strain 536 / UPEC).